A 44-amino-acid chain; its full sequence is Cytochrome b559 subunit beta (44 aa).

A helical transmembrane segment spans residues 19–35 (WLAIHGLAIPTVFFLGA). A heme-binding site is contributed by histidine 23.

This sequence belongs to the PsbE/PsbF family. Heterodimer of an alpha subunit and a beta subunit. PSII is composed of 1 copy each of membrane proteins PsbA, PsbB, PsbC, PsbD, PsbE, PsbF, PsbH, PsbI, PsbJ, PsbK, PsbL, PsbM, PsbT, PsbX, PsbY, PsbZ, Psb30/Ycf12, at least 3 peripheral proteins of the oxygen-evolving complex and a large number of cofactors. It forms dimeric complexes. The cofactor is heme b.

Its subcellular location is the plastid. The protein localises to the chloroplast thylakoid membrane. This b-type cytochrome is tightly associated with the reaction center of photosystem II (PSII). PSII is a light-driven water:plastoquinone oxidoreductase that uses light energy to abstract electrons from H(2)O, generating O(2) and a proton gradient subsequently used for ATP formation. It consists of a core antenna complex that captures photons, and an electron transfer chain that converts photonic excitation into a charge separation. This Porphyra purpurea (Red seaweed) protein is Cytochrome b559 subunit beta.